A 408-amino-acid chain; its full sequence is D-inositol 3-phosphate glycosyltransferase (408 aa).

Position 7 (His-7) interacts with 1D-myo-inositol 3-phosphate. Residues 13–14 (QP) and Gly-21 each bind UDP-N-acetyl-alpha-D-glucosamine. 1D-myo-inositol 3-phosphate contacts are provided by residues 18–23 (DAGGMN), Lys-76, Tyr-109, Thr-133, and Arg-153. 3 residues coordinate UDP-N-acetyl-alpha-D-glucosamine: Arg-227, Lys-232, and Val-288. 3 residues coordinate Mg(2+): Phe-297, Arg-298, and Ala-300. Positions 310 and 318 each coordinate UDP-N-acetyl-alpha-D-glucosamine. Thr-324 serves as a coordination point for Mg(2+).

It belongs to the glycosyltransferase group 1 family. MshA subfamily. In terms of assembly, homodimer.

The catalysed reaction is 1D-myo-inositol 3-phosphate + UDP-N-acetyl-alpha-D-glucosamine = 1D-myo-inositol 2-acetamido-2-deoxy-alpha-D-glucopyranoside 3-phosphate + UDP + H(+). Functionally, catalyzes the transfer of a N-acetyl-glucosamine moiety to 1D-myo-inositol 3-phosphate to produce 1D-myo-inositol 2-acetamido-2-deoxy-glucopyranoside 3-phosphate in the mycothiol biosynthesis pathway. The chain is D-inositol 3-phosphate glycosyltransferase from Paenarthrobacter aurescens (strain TC1).